Consider the following 551-residue polypeptide: GMP synthase [glutamine-hydrolyzing] (551 aa).

Residues 1–28 (MTSSPTAAARTEGEAAPTVPTQVESGTA) form a disordered region. A compositionally biased stretch (polar residues) spans 19-28 (VPTQVESGTA). Residues 37–227 (MVAILDFGSQ…VYHICGCEPE (191 aa)) form the Glutamine amidotransferase type-1 domain. Catalysis depends on Cys114, which acts as the Nucleophile. Active-site residues include His201 and Glu203. In terms of domain architecture, GMPS ATP-PPase spans 228 to 426 (WTTAAFIEEA…LGLPEEIVQR (199 aa)). Position 255–261 (255–261 (SGGVDSS)) interacts with ATP.

Homodimer.

The catalysed reaction is XMP + L-glutamine + ATP + H2O = GMP + L-glutamate + AMP + diphosphate + 2 H(+). It functions in the pathway purine metabolism; GMP biosynthesis; GMP from XMP (L-Gln route): step 1/1. Catalyzes the synthesis of GMP from XMP. In Gloeobacter violaceus (strain ATCC 29082 / PCC 7421), this protein is GMP synthase [glutamine-hydrolyzing].